The primary structure comprises 387 residues: MNIHEYQAKEVLRKFGVATLKGKLAHSPEEAVAAAKEIGGSVWVVKAQIHAGGRGKGGGVKVAKSLDEVSEFTKKMIGMTLVTHQTGPEGKVVQKVFIEQGCNIAKEYYVACLIDRATGRAAMMASSEGGMDIEEVAEHNPDAIKKVDIDPTVGLMPFQARELAFQIGMEPAIVNKAVKFFAGLYNAFVATDCSIAEINPLVVTKEGDVLCLDAKMNFDSNSLFRHPDIVEMRDLNEEEPSEIEASKFDLAFIKLDGNIGCLVNGAGLAMATLDIIKLHGAEPANFLDVGGGANKEKVTEAFKIILKDKNVKGILVNIFGGIMKCDIIAEGVIAASKELGLKVPLVVRLEGTNVELGKKMLKESGLNITPADNLTDAAKKIVAAIKG.

One can recognise an ATP-grasp domain in the interval 9 to 244 (KEVLRKFGVA…LNEEEPSEIE (236 aa)). Residues K46, 53–55 (GRG), E99, C102, and E107 each bind ATP. Mg(2+) is bound by residues N199 and D213. Residues N264 and 321-323 (GIM) each bind substrate.

Belongs to the succinate/malate CoA ligase beta subunit family. As to quaternary structure, heterotetramer of two alpha and two beta subunits. Requires Mg(2+) as cofactor.

The catalysed reaction is succinate + ATP + CoA = succinyl-CoA + ADP + phosphate. It carries out the reaction GTP + succinate + CoA = succinyl-CoA + GDP + phosphate. It participates in carbohydrate metabolism; tricarboxylic acid cycle; succinate from succinyl-CoA (ligase route): step 1/1. Functionally, succinyl-CoA synthetase functions in the citric acid cycle (TCA), coupling the hydrolysis of succinyl-CoA to the synthesis of either ATP or GTP and thus represents the only step of substrate-level phosphorylation in the TCA. The beta subunit provides nucleotide specificity of the enzyme and binds the substrate succinate, while the binding sites for coenzyme A and phosphate are found in the alpha subunit. The polypeptide is Succinate--CoA ligase [ADP-forming] subunit beta (Bdellovibrio bacteriovorus (strain ATCC 15356 / DSM 50701 / NCIMB 9529 / HD100)).